A 208-amino-acid chain; its full sequence is Uracil phosphoribosyltransferase (208 aa).

5-phospho-alpha-D-ribose 1-diphosphate contacts are provided by residues Arg-78, Arg-103, and 130–138; that span reads DPMLATGGS. Residues Ile-193 and 198-200 contribute to the uracil site; that span reads GDA. A 5-phospho-alpha-D-ribose 1-diphosphate-binding site is contributed by Asp-199.

It belongs to the UPRTase family. Mg(2+) serves as cofactor.

The enzyme catalyses UMP + diphosphate = 5-phospho-alpha-D-ribose 1-diphosphate + uracil. It participates in pyrimidine metabolism; UMP biosynthesis via salvage pathway; UMP from uracil: step 1/1. With respect to regulation, allosterically activated by GTP. Functionally, catalyzes the conversion of uracil and 5-phospho-alpha-D-ribose 1-diphosphate (PRPP) to UMP and diphosphate. This Roseiflexus sp. (strain RS-1) protein is Uracil phosphoribosyltransferase.